The sequence spans 67 residues: Large ribosomal subunit protein bL35 (67 aa).

It belongs to the bacterial ribosomal protein bL35 family.

The sequence is that of Large ribosomal subunit protein bL35 from Bartonella tribocorum (strain CIP 105476 / IBS 506).